Consider the following 241-residue polypeptide: Pyridoxine 5'-phosphate synthase (241 aa).

N7 is a binding site for 3-amino-2-oxopropyl phosphate. 9–10 contributes to the 1-deoxy-D-xylulose 5-phosphate binding site; it reads DH. 3-amino-2-oxopropyl phosphate is bound at residue R18. H43 functions as the Proton acceptor in the catalytic mechanism. Residues R45 and H50 each coordinate 1-deoxy-D-xylulose 5-phosphate. E70 acts as the Proton acceptor in catalysis. A 1-deoxy-D-xylulose 5-phosphate-binding site is contributed by T100. The Proton donor role is filled by H191. 3-amino-2-oxopropyl phosphate contacts are provided by residues G192 and 213–214; that span reads GH.

It belongs to the PNP synthase family. In terms of assembly, homooctamer; tetramer of dimers.

The protein resides in the cytoplasm. The catalysed reaction is 3-amino-2-oxopropyl phosphate + 1-deoxy-D-xylulose 5-phosphate = pyridoxine 5'-phosphate + phosphate + 2 H2O + H(+). It participates in cofactor biosynthesis; pyridoxine 5'-phosphate biosynthesis; pyridoxine 5'-phosphate from D-erythrose 4-phosphate: step 5/5. Functionally, catalyzes the complicated ring closure reaction between the two acyclic compounds 1-deoxy-D-xylulose-5-phosphate (DXP) and 3-amino-2-oxopropyl phosphate (1-amino-acetone-3-phosphate or AAP) to form pyridoxine 5'-phosphate (PNP) and inorganic phosphate. This Nostoc punctiforme (strain ATCC 29133 / PCC 73102) protein is Pyridoxine 5'-phosphate synthase.